A 78-amino-acid polypeptide reads, in one-letter code: RNA-binding protein Hfq (78 aa).

Residues 10 to 69 (DPFLNALRKEHVPVSIYLVNGIKLQGNIESFDQYVVLLRNTVTQMVYKHAISTVVPARPV) form the Sm domain.

Belongs to the Hfq family. As to quaternary structure, homohexamer.

In terms of biological role, RNA chaperone that binds small regulatory RNA (sRNAs) and mRNAs to facilitate mRNA translational regulation in response to envelope stress, environmental stress and changes in metabolite concentrations. Also binds with high specificity to tRNAs. The polypeptide is RNA-binding protein Hfq (Paraburkholderia phytofirmans (strain DSM 17436 / LMG 22146 / PsJN) (Burkholderia phytofirmans)).